The chain runs to 502 residues: Hexokinase-9 (502 aa).

A helical membrane pass occupies residues 5 to 24 (AALASAAMAAAAVAVVSTVL). The 452-residue stretch at 37–488 (RAEAVLLRDL…SGVGAALLAA (452 aa)) folds into the Hexokinase domain. The interval 92–230 (SGGEKGMFYA…GLDMKVTALV (139 aa)) is hexokinase small subdomain. Residues Gly106, Thr107, and Asn108 each coordinate ADP. D-glucose-binding residues include Thr196, Lys197, Asn231, and Asp232. The segment at 231 to 477 (NDTVGTLAAG…PSVMIKHVND (247 aa)) is hexokinase large subdomain. Thr255 is a binding site for ADP. D-glucose-binding residues include Asn258, Glu286, and Glu317. Gly442 contributes to the ADP binding site.

The protein belongs to the hexokinase family. As to expression, expressed in roots, leaves, flowers, immature seeds, endosperm and seed coat.

The protein resides in the plastid. It localises to the chloroplast outer membrane. It catalyses the reaction a D-hexose + ATP = a D-hexose 6-phosphate + ADP + H(+). The enzyme catalyses D-fructose + ATP = D-fructose 6-phosphate + ADP + H(+). It carries out the reaction D-glucose + ATP = D-glucose 6-phosphate + ADP + H(+). The protein operates within carbohydrate metabolism; hexose metabolism. It functions in the pathway carbohydrate degradation; glycolysis; D-glyceraldehyde 3-phosphate and glycerone phosphate from D-glucose: step 1/4. Its function is as follows. Fructose and glucose phosphorylating enzyme. This Oryza sativa subsp. japonica (Rice) protein is Hexokinase-9 (HXK9).